The sequence spans 204 residues: Superoxide dismutase [Mn] (204 aa).

Mn(2+) contacts are provided by His29, His84, Asp167, and His171.

Belongs to the iron/manganese superoxide dismutase family. In terms of assembly, homotetramer. Requires Mn(2+) as cofactor.

The catalysed reaction is 2 superoxide + 2 H(+) = H2O2 + O2. In terms of biological role, destroys superoxide anion radicals which are normally produced within the cells and which are toxic to biological systems. This is Superoxide dismutase [Mn] (sodA) from Thermus thermophilus (strain ATCC BAA-163 / DSM 7039 / HB27).